The primary structure comprises 197 residues: Putative WUSCHEL-related homeobox 10 (197 aa).

The segment at residues 75–139 is a DNA-binding region (homeobox; WUS-type); that stretch reads STRPRWTPTT…NRRARSKRKQ (65 aa). Residues 132–168 form a disordered region; that stretch reads RARSKRKQPPTTTITSSQADDAAVTTTEERGRCGDDS. Over residues 140 to 150 the composition is skewed to polar residues; sequence PPTTTITSSQA.

Belongs to the WUS homeobox family.

Its subcellular location is the nucleus. Potential transcription factor that plays a central role during developmental processes. In Arabidopsis thaliana (Mouse-ear cress), this protein is Putative WUSCHEL-related homeobox 10 (WOX10).